A 272-amino-acid chain; its full sequence is Digeranylgeranylglyceryl phosphate synthase (272 aa).

8 helical membrane-spanning segments follow: residues 16 to 36 (AFIA…EIIL), 79 to 99 (ALYY…IISL), 100 to 120 (ENGI…YDLK), 124 to 144 (FIGN…GGLI), 148 to 168 (VNLG…REII), 194 to 214 (AVML…LLYY), 217 to 237 (IFSI…VYSA), and 252 to 272 (ISKY…MGAL).

It belongs to the UbiA prenyltransferase family. DGGGP synthase subfamily. Mg(2+) serves as cofactor.

Its subcellular location is the cell membrane. It carries out the reaction sn-3-O-(geranylgeranyl)glycerol 1-phosphate + (2E,6E,10E)-geranylgeranyl diphosphate = 2,3-bis-O-(geranylgeranyl)-sn-glycerol 1-phosphate + diphosphate. It functions in the pathway membrane lipid metabolism; glycerophospholipid metabolism. In terms of biological role, prenyltransferase that catalyzes the transfer of the geranylgeranyl moiety of geranylgeranyl diphosphate (GGPP) to the C2 hydroxyl of (S)-3-O-geranylgeranylglyceryl phosphate (GGGP). This reaction is the second ether-bond-formation step in the biosynthesis of archaeal membrane lipids. The chain is Digeranylgeranylglyceryl phosphate synthase from Methanosphaera stadtmanae (strain ATCC 43021 / DSM 3091 / JCM 11832 / MCB-3).